Consider the following 92-residue polypeptide: Long neurotoxin 1 (92 aa).

Positions 1–21 (MKTLLLTLVVVTIVCLDLGYT) are cleaved as a signal peptide. Disulfide bonds link Cys24-Cys42, Cys35-Cys63, Cys48-Cys52, Cys67-Cys79, and Cys80-Cys85.

Belongs to the three-finger toxin family. Long-chain subfamily. Type II alpha-neurotoxin sub-subfamily. Expressed by the venom gland.

The protein resides in the secreted. Functionally, binds with high affinity to muscular (alpha-1/CHRNA1) and neuronal (alpha-7/CHRNA7) nicotinic acetylcholine receptor (nAChR) and inhibits acetylcholine from binding to the receptor, thereby impairing neuromuscular and neuronal transmission. The protein is Long neurotoxin 1 of Oxyuranus microlepidotus (Inland taipan).